A 1453-amino-acid polypeptide reads, in one-letter code: MFSFVDLRLLLLLGATALLTHGQEDIPEVSCIHNGLRVPNGETWKPDVCLICICHNGTAVCDGVLCKEDLDCPNPQKREGECCPFCPEEYVSPDAEVIGVEGPKGDPGPQGPRGPVGPPGQDGIPGQPGLPGPPGPPGPPGPPGLGGNFASQMSYGYDEKSAGVSVPGPMGPSGPRGLPGPPGAPGPQGFQGPPGEPGEPGASGPMGPRGPPGPPGKNGDDGEAGKPGRPGERGPPGPQGARGLPGTAGLPGMKGHRGFSGLDGAKGDTGPAGPKGEPGSPGENGAPGQMGPRGLPGERGRPGPPGSAGARGNDGAVGAAGPPGPTGPTGPPGFPGAAGAKGEAGPQGARGSEGPQGVRGEPGPPGPAGAAGPAGNPGADGQPGAKGANGAPGIAGAPGFPGARGPSGPQGPSGAPGPKGNSGEPGAPGNKGDTGAKGEPGPAGVQGPPGPAGEEGKRGARGEPGPSGLPGPPGERGGPGSRGFPGADGVAGPKGPAGERGSPGPAGPKGSPGEAGRPGEAGLPGAKGLTGSPGSPGPDGKTGPPGPAGQDGRPGPAGPPGARGQAGVMGFPGPKGTAGEPGKAGERGVPGPPGAVGPAGKDGEAGAQGAPGPAGPAGERGEQGPAGSPGFQGLPGPAGPPGEAGKPGEQGVPGDLGAPGPSGARGERGFPGERGVQGPPGPAGPRGNNGAPGNDGAKGDTGAPGAPGSQGAPGLQGMPGERGAAGLPGPKGDRGDAGPKGADGSPGKDGVRGLTGPIGPPGPAGAPGDKGETGPSGPAGPTGARGAPGDRGEPGPPGPAGFAGPPGADGQPGAKGEPGDTGVKGDAGPPGPAGPAGPPGPIGNVGAPGPKGSRGAAGPPGATGFPGAAGRVGPPGPSGNAGPPGPPGPVGKEGGKGPRGETGPAGRPGEVGPPGPPGPAGEKGSPGADGPAGSPGTPGPQGIAGQRGVVGLPGQRGERGFPGLPGPSGEPGKQGPSGASGERGPPGPMGPPGLAGPPGESGREGSPGAEGSPGRDGAPGAKGDRGETGPAGPPGAPGAPGAPGPVGPAGKNGDRGETGPAGPAGPIGPAGARGPAGPQGPRGDKGETGEQGDRGIKGHRGFSGLQGPPGSPGSPGEQGPSGASGPAGPRGPPGSAGSPGKDGLNGLPGPIGPPGPRGRTGDSGPAGPPGPPGPPGPPGPPSGGYDFSFLPQPPQEKSQDGGRYYRADDANVVRDRDLEVDTTLKSLSQQIENIRSPEGSRKNPARTCRDLKMCHSDWKSGEYWIDPNQGCNLDAIKVYCNMETGQTCVFPTQPSVPQKNWYISPNPKEKKHVWFGESMTDGFQFEYGSEGSDPADVAIQLTFLRLMSTEASQNITYHCKNSVAYMDQQTGNLKKSLLLQGSNEIELRGEGNSRFTYSTLVDGCTSHTGTWGKTVIEYKTTKTSRLPIIDVAPLDIGAPDQEFGMDIGPACFV.

The N-terminal stretch at 1–22 (MFSFVDLRLLLLLGATALLTHG) is a signal peptide. Positions 23–151 (QEDIPEVSCI…PPGLGGNFAS (129 aa)) are cleaved as a propeptide — N-terminal propeptide. One can recognise a VWFC domain in the interval 29–87 (VSCIHNGLRVPNGETWKPDVCLICICHNGTAVCDGVLCKEDLDCPNPQKREGECCPFCP). Residue N56 is glycosylated (N-linked (GlcNAc...) asparagine). Positions 97-1206 (VIGVEGPKGD…KSQDGGRYYR (1110 aa)) are disordered. Pro residues-rich tracts occupy residues 109–118 (PQGPRGPVGP) and 128–143 (PGLP…PGPP). Q152 is modified (pyrrolidone carboxylic acid). The interval 152–167 (QMSYGYDEKSAGVSVP) is nonhelical region (N-terminal). Position 160 is an allysine (K160). S161 is subject to Phosphoserine. The segment at 168 to 1181 (GPMGPSGPRG…PGPPGPPGPP (1014 aa)) is triple-helical region. P179, P182, P185, P194, P197, P200, P215, P230, P236, P245, and P251 each carry 4-hydroxyproline. The span at 187 to 206 (PQGFQGPPGEPGEPGASGPM) shows a compositional bias: low complexity. Over residues 218–232 (NGDDGEAGKPGRPGE) the composition is skewed to basic and acidic residues. K254 is subject to 5-hydroxylysine; alternate. O-linked (Gal...) hydroxylysine; alternate glycosylation occurs at K254. Residue S260 is modified to Phosphoserine. 5 positions are modified to 4-hydroxyproline: P278, P281, P287, P296, and P302. The span at 307–320 (SAGARGNDGAVGAA) shows a compositional bias: low complexity. Residues 322 to 334 (PPGPTGPTGPPGF) show a composition bias toward pro residues. 11 positions are modified to 4-hydroxyproline: P323, P332, P335, P362, P365, P377, P383, P392, P398, P401, and P416. A compositionally biased stretch (low complexity) spans 335-361 (PGAAGAKGEAGPQGARGSEGPQGVRGE). Low complexity predominate over residues 368–418 (AGAAGPAGNPGADGQPGAKGANGAPGIAGAPGFPGARGPSGPQGPSGAPGP). K419 is subject to 5-hydroxylysine. Residues P425, P428, P440, P449, P464, P470, P479, and P485 each carry the 4-hydroxyproline modification. Over residues 474–483 (GERGGPGSRG) the composition is skewed to gly residues. K494 is subject to 5-hydroxylysine. P503, P512, P518, P524, P533, P536, P545, P554, P560, P572, P581, P590, P593, P611, P629, P635, P641, P647, P653, P659, P671, P680, P692, P704, P707, P713, P719, and P728 each carry 4-hydroxyproline. A compositionally biased stretch (low complexity) spans 527–566 (KGLTGSPGSPGPDGKTGPPGPAGQDGRPGPAGPPGARGQA). Residues 623–650 (QGPAGSPGFQGLPGPAGPPGEAGKPGEQ) are compositionally biased toward low complexity. Composition is skewed to low complexity over residues 685–695 (PRGNNGAPGND) and 703–716 (APGA…PGLQ). The short motif at 734–736 (RGD) is the Cell attachment site element. The residue at position 740 (K740) is a 5-hydroxylysine. 4-hydroxyproline is present on residues P746, P761, and P767. The span at 773–787 (TGPSGPAGPTGARGA) shows a compositional bias: low complexity. S776 is subject to Phosphoserine. 4-hydroxyproline is present on residues P788, P794, P797, P806, P812, P830, P839, and P848. A compositionally biased stretch (low complexity) spans 800–815 (AGFAGPPGADGQPGAK). Pro residues predominate over residues 829–841 (PPGPAGPAGPPGP). Residues 842–872 (IGNVGAPGPKGSRGAAGPPGATGFPGAAGRV) show a composition bias toward low complexity. Residue K851 is modified to 5-hydroxylysine. A 4-hydroxyproline mark is found at P860 and P866. 3-hydroxyproline is present on P874. Residues P875, P884, P887, P908, P917, P926, P935, P953, P962, P965, P971, P986, P992, P998, P1007, and P1013 each carry the 4-hydroxyproline modification. The span at 901 to 910 (ETGPAGRPGE) shows a compositional bias: low complexity. A compositionally biased stretch (low complexity) spans 920–935 (AGEKGSPGADGPAGSP). Over residues 985 to 995 (PPGPMGPPGLA) the composition is skewed to pro residues. A compositionally biased stretch (low complexity) spans 997–1012 (PPGESGREGSPGAEGS). A 5-hydroxylysine modification is found at K1022. The segment covering 1031–1046 (AGPPGAPGAPGAPGPV) has biased composition (pro residues). Residues P1034, P1037, and P1040 each carry the 4-hydroxyproline modification. The segment covering 1067 to 1081 (IGPAGARGPAGPQGP) has biased composition (low complexity). Positions 1082-1084 (RGD) match the Cell attachment site motif. Residues 1082 to 1096 (RGDKGETGEQGDRGI) show a composition bias toward basic and acidic residues. K1085 carries the 5-hydroxylysine modification. K1097 carries the 5-hydroxylysine; alternate modification. K1097 is a glycosylation site (O-linked (Gal...) hydroxylysine; alternate). Residues 1102 to 1148 (FSGLQGPPGSPGSPGEQGPSGASGPAGPRGPPGSAGSPGKDGLNGLP) are compositionally biased toward low complexity. P1109, P1112, P1115, P1133, and P1148 each carry 4-hydroxyproline. Residue P1153 is modified to 3-hydroxyproline. Position 1154 is a 4-hydroxyproline (P1154). Pro residues predominate over residues 1166 to 1181 (AGPPGPPGPPGPPGPP). 3-hydroxyproline is present on P1168. Residue P1169 is modified to 4-hydroxyproline. At P1171 the chain carries 3-hydroxyproline. At P1172 the chain carries 4-hydroxyproline. The residue at position 1174 (P1174) is a 3-hydroxyproline. P1175, P1178, and P1181 each carry 4-hydroxyproline. Residues 1176–1186 (GPPGPPSGGYD) form a major antigenic determinant (of neutral salt-extracted rat skin collagen) region. Positions 1182 to 1207 (SGGYDFSFLPQPPQEKSQDGGRYYRA) are nonhelical region (C-terminal). K1197 is modified (allysine). Basic and acidic residues predominate over residues 1197–1206 (KSQDGGRYYR). Residues 1208-1453 (DDANVVRDRD…GMDIGPACFV (246 aa)) constitute a propeptide, C-terminal propeptide. Residues 1218-1453 (LEVDTTLKSL…GMDIGPACFV (236 aa)) form the Fibrillar collagen NC1 domain. Cystine bridges form between C1248–C1280, C1288–C1451, and C1359–C1404. 5 residues coordinate Ca(2+): D1266, N1268, Q1269, C1271, and D1274. N1354 carries an N-linked (GlcNAc...) asparagine glycan.

Belongs to the fibrillar collagen family. As to quaternary structure, trimers of one alpha 2(I) and two alpha 1(I) chains. Interacts with MRC2. Interacts with TRAM2. Interacts with MFAP4 in a Ca (2+)-dependent manner. In terms of processing, contains mostly 4-hydroxyproline. Proline residues at the third position of the tripeptide repeating unit (G-X-Y) are hydroxylated in some or all of the chains. Post-translationally, contains 3-hydroxyproline at a few sites. This modification occurs on the first proline residue in the sequence motif Gly-Pro-Hyp, where Hyp is 4-hydroxyproline. Lysine residues at the third position of the tripeptide repeating unit (G-X-Y) are 5-hydroxylated in some or all of the chains. In terms of processing, O-glycosylated on hydroxylated lysine residues. The O-linked glycan consists of a Glc-Gal disaccharide. As to expression, forms the fibrils of tendon, ligaments and bones. In bones the fibrils are mineralized with calcium hydroxyapatite.

It is found in the secreted. It localises to the extracellular space. Its subcellular location is the extracellular matrix. In terms of biological role, type I collagen is a member of group I collagen (fibrillar forming collagen). The sequence is that of Collagen alpha-1(I) chain (Col1a1) from Rattus norvegicus (Rat).